The chain runs to 73 residues: U3-agatoxin-Ao1i (73 aa).

A signal peptide spans 1–20; the sequence is MRTIISLLLLSAMVFAEIEA. The propeptide occupies 21–34; that stretch reads ISLEEGLQLFEGER. 4 disulfides stabilise this stretch: Cys-36-Cys-52, Cys-43-Cys-57, Cys-51-Cys-67, and Cys-59-Cys-65. Ser-71 is subject to Serine amide.

It belongs to the neurotoxin 07 (Beta/delta-agtx) family. 03 (aga-4) subfamily. Aga sub-subfamily. Expressed by the venom gland.

The protein resides in the secreted. In terms of biological role, insecticidal neurotoxin that induces an irreversible spastic paralysis when injected into insects. Modifies presynaptic voltage-gated sodium channels (Nav), causing them to open at the normal resting potential of the nerve. This leads to spontaneous release of neurotransmitter and repetitive action potentials in motor neurons. This chain is U3-agatoxin-Ao1i, found in Agelena orientalis (Funnel-web spider).